The primary structure comprises 332 residues: 2,3-diketo-L-gulonate reductase (332 aa).

The active-site Proton donor is His44. NAD(+)-binding positions include 168-174 (ITMVDMS), 224-225 (WK), and 304-306 (GHE).

It belongs to the LDH2/MDH2 oxidoreductase family. DlgD subfamily. Homodimer.

Its subcellular location is the cytoplasm. The catalysed reaction is 3-dehydro-L-gulonate + NAD(+) = 2,3-dioxo-L-gulonate + NADH + H(+). The enzyme catalyses 3-dehydro-L-gulonate + NADP(+) = 2,3-dioxo-L-gulonate + NADPH + H(+). Its function is as follows. Catalyzes the reduction of 2,3-diketo-L-gulonate in the presence of NADH, to form 3-keto-L-gulonate. This chain is 2,3-diketo-L-gulonate reductase, found in Salmonella typhimurium (strain LT2 / SGSC1412 / ATCC 700720).